We begin with the raw amino-acid sequence, 152 residues long: Small ribosomal subunit protein uS9 (152 aa).

Belongs to the universal ribosomal protein uS9 family.

The sequence is that of Small ribosomal subunit protein uS9 from Mycobacterium ulcerans (strain Agy99).